A 411-amino-acid chain; its full sequence is Phosphopentomutase (411 aa).

Mn(2+) is bound by residues aspartate 14, aspartate 306, histidine 311, aspartate 347, histidine 348, and histidine 359.

The protein belongs to the phosphopentomutase family. Mn(2+) serves as cofactor.

The protein resides in the cytoplasm. The enzyme catalyses 2-deoxy-alpha-D-ribose 1-phosphate = 2-deoxy-D-ribose 5-phosphate. It catalyses the reaction alpha-D-ribose 1-phosphate = D-ribose 5-phosphate. The protein operates within carbohydrate degradation; 2-deoxy-D-ribose 1-phosphate degradation; D-glyceraldehyde 3-phosphate and acetaldehyde from 2-deoxy-alpha-D-ribose 1-phosphate: step 1/2. Its function is as follows. Isomerase that catalyzes the conversion of deoxy-ribose 1-phosphate (dRib-1-P) and ribose 1-phosphate (Rib-1-P) to deoxy-ribose 5-phosphate (dRib-5-P) and ribose 5-phosphate (Rib-5-P), respectively. The sequence is that of Phosphopentomutase from Lactococcus lactis subsp. lactis (strain IL1403) (Streptococcus lactis).